The primary structure comprises 258 residues: Peptide methionine sulfoxide reductase A4, chloroplastic (258 aa).

Residues 1–53 (MQVLVVSPPLIAAASLSKPLNSLSKAALSFSRAKPICPFPQTSRRPISVYKSP) constitute a chloroplast transit peptide. Met54 bears the N-acetylmethionine mark. The segment at 62–89 (GFGSRPQAQADPSSAAIAQGPDDDVPSS) is disordered. Phosphoserine is present on Ser245.

The protein belongs to the MsrA Met sulfoxide reductase family. As to expression, expressed in rosette and cauline leaves, and at lower levels in stems and flowers (at protein level).

It localises to the plastid. It is found in the chloroplast stroma. It catalyses the reaction L-methionyl-[protein] + [thioredoxin]-disulfide + H2O = L-methionyl-(S)-S-oxide-[protein] + [thioredoxin]-dithiol. The enzyme catalyses [thioredoxin]-disulfide + L-methionine + H2O = L-methionine (S)-S-oxide + [thioredoxin]-dithiol. Catalyzes the reduction of methionine sulfoxide (MetSO) to methionine in proteins. Plays a protective role against oxidative stress by restoring activity to proteins that have been inactivated by methionine oxidation. Prevents the methionine sulfoxidation of the heat shock protein HSP21 and its subsequent inactivation. MSRA family specifically reduces the MetSO S-enantiomer. The protein is Peptide methionine sulfoxide reductase A4, chloroplastic (MSR4) of Arabidopsis thaliana (Mouse-ear cress).